A 1218-amino-acid chain; its full sequence is Chitin synthase 4 (1218 aa).

2 disordered regions span residues 1-93 and 132-190; these read MAEP…PERN and TVSS…RRQK. A compositionally biased stretch (basic and acidic residues) spans 14 to 34; it reads TRDKSHSPYRESPSRRLRDVE. N-linked (GlcNAc...) asparagine glycosylation is present at Asn50. Polar residues-rich tracts occupy residues 71–80 and 133–142; these read SNPNPMSQSD and VSSGSTQQDT. Basic and acidic residues predominate over residues 175–190; it reads RKDTRNLTEEEKRRQK. N-linked (GlcNAc...) asparagine glycosylation is present at Asn180. The next 2 helical transmembrane spans lie at 200–220 and 235–255; these read IWNIYCAVVTFWAPDCLLQCF and VGLISIILLIAAFVGFLTFGF. N-linked (GlcNAc...) asparagine glycosylation is found at Asn365, Asn404, and Asn426. Residues 487–507 form a helical membrane-spanning segment; that stretch reads VVLYVSLVFILAIVAAKFFLA. 2 disordered regions span residues 548–570 and 582–606; these read PKITDPASTVTGSDGRTSKRGSM and YAVDRRSSRPPPTTMTSQSSNAKLL. The segment covering 553–562 has biased composition (polar residues); the sequence is PASTVTGSDG. Asn617, Asn903, and Asn1030 each carry an N-linked (GlcNAc...) asparagine glycan. The next 3 helical transmembrane spans lie at 1062-1082, 1087-1107, and 1115-1135; these read IGTLVLPAAISFTFYLIIISI, VPVIPLVLLALILGLPAILIV, and YILWMGIYLLSLPIWNFVLPA. Positions 1188 to 1218 are disordered; sequence QANGSVWNQQPPTRPPSGYGSMHGFEPYRDY. The span at 1189–1198 shows a compositional bias: polar residues; the sequence is ANGSVWNQQP. N-linked (GlcNAc...) asparagine glycosylation is present at Asn1190.

It belongs to the chitin synthase family. Class IV subfamily. In terms of processing, maximal activity requires trypsin activation, suggesting a zymogenic nature.

The protein resides in the cell membrane. The catalysed reaction is [(1-&gt;4)-N-acetyl-beta-D-glucosaminyl](n) + UDP-N-acetyl-alpha-D-glucosamine = [(1-&gt;4)-N-acetyl-beta-D-glucosaminyl](n+1) + UDP + H(+). With respect to regulation, activity is stimulated by Mg(2+), and is more inhibited by polyoxin D than by nikkomycin. Its function is as follows. Polymerizes chitin, a structural polymer of the cell wall and septum, by transferring the sugar moiety of UDP-GlcNAc to the non-reducing end of the growing chitin polymer. CHS4 synthesizes a large amount of chitin and appears to play a role in the process of cell separation. CHS4 is particularly well suited for functioning at the higher temperatures associated with its poorly characterized saprophic environment and with human infection. The chain is Chitin synthase 4 from Exophiala dermatitidis (strain ATCC 34100 / CBS 525.76 / NIH/UT8656) (Black yeast).